The primary structure comprises 255 residues: MAKESIQAIKEALLTVTDATDERLASWREDERSGVQQAIKQWERRQLAKEKEWQLFKEMSQFEEAAYKKGHRLIAGIDEVGRGPLAGPVVTAAVILPKDCQLLGLNDSKKLSAKKRETLYNQIQEQAVAIGLGIADQGVIDQINIYQATKQAMKMAIDDLAFTPDYLLIDAMQLDVPQPQESLIKGDARSISIAAASIIAKVTRDRLMEEYDELYPGYGFKNNAGYGTKEHLLGLEKYGVTPIHRRTFAPIKDMI.

In terms of domain architecture, RNase H type-2 spans 72–255 (RLIAGIDEVG…RTFAPIKDMI (184 aa)). Residues Asp-78, Glu-79, and Asp-170 each coordinate a divalent metal cation.

This sequence belongs to the RNase HII family. The cofactor is Mn(2+). It depends on Mg(2+) as a cofactor.

Its subcellular location is the cytoplasm. The catalysed reaction is Endonucleolytic cleavage to 5'-phosphomonoester.. Functionally, endonuclease that specifically degrades the RNA of RNA-DNA hybrids. This Enterococcus faecalis (strain ATCC 700802 / V583) protein is Ribonuclease HII.